A 286-amino-acid polypeptide reads, in one-letter code: Phosphonates import ATP-binding protein PhnC (286 aa).

One can recognise an ABC transporter domain in the interval 3 to 246 (FHLKQVTRRF…AVTEIYGTDS (244 aa)). Residue 35-42 (GRSGAGKS) coordinates ATP.

Belongs to the ABC transporter superfamily. Phosphonates importer (TC 3.A.1.9.1) family. In terms of assembly, the complex is composed of two ATP-binding proteins (PhnC), two transmembrane proteins (PhnE) and a solute-binding protein (PhnD).

It localises to the cell inner membrane. The enzyme catalyses phosphonate(out) + ATP + H2O = phosphonate(in) + ADP + phosphate + H(+). In terms of biological role, part of the ABC transporter complex PhnCDE involved in phosphonates import. Responsible for energy coupling to the transport system. This is Phosphonates import ATP-binding protein PhnC from Agrobacterium fabrum (strain C58 / ATCC 33970) (Agrobacterium tumefaciens (strain C58)).